The primary structure comprises 353 residues: UDP-3-O-acylglucosamine N-acyltransferase (353 aa).

Catalysis depends on His-242, which acts as the Proton acceptor.

Belongs to the transferase hexapeptide repeat family. LpxD subfamily. Homotrimer.

The enzyme catalyses a UDP-3-O-[(3R)-3-hydroxyacyl]-alpha-D-glucosamine + a (3R)-hydroxyacyl-[ACP] = a UDP-2-N,3-O-bis[(3R)-3-hydroxyacyl]-alpha-D-glucosamine + holo-[ACP] + H(+). It participates in bacterial outer membrane biogenesis; LPS lipid A biosynthesis. In terms of biological role, catalyzes the N-acylation of UDP-3-O-acylglucosamine using 3-hydroxyacyl-ACP as the acyl donor. Is involved in the biosynthesis of lipid A, a phosphorylated glycolipid that anchors the lipopolysaccharide to the outer membrane of the cell. The sequence is that of UDP-3-O-acylglucosamine N-acyltransferase from Pseudomonas aeruginosa (strain UCBPP-PA14).